We begin with the raw amino-acid sequence, 150 residues long: MNLSNLQPAEGSTHNQNKRLGRGEGSGKGGTSARGHKGAKSRSGYSKKIGFEGGQMPLQRRVPKFGFTNINRIEYQGVNLDNLQLLVDNGIVTDTVDMAVFITSRLATKTEVVKILGRGELKAKLKVSAHKFTATAKAAIEAAGGEAIEL.

A compositionally biased stretch (polar residues) spans 1–15; the sequence is MNLSNLQPAEGSTHN. The segment at 1-52 is disordered; it reads MNLSNLQPAEGSTHNQNKRLGRGEGSGKGGTSARGHKGAKSRSGYSKKIGFE. Positions 23–32 are enriched in gly residues; the sequence is GEGSGKGGTS.

This sequence belongs to the universal ribosomal protein uL15 family. Part of the 50S ribosomal subunit.

Functionally, binds to the 23S rRNA. The polypeptide is Large ribosomal subunit protein uL15 (Flavobacterium psychrophilum (strain ATCC 49511 / DSM 21280 / CIP 103535 / JIP02/86)).